Reading from the N-terminus, the 31-residue chain is uncharacterized protein (31 aa).

This is an uncharacterized protein from Caenorhabditis elegans.